Reading from the N-terminus, the 200-residue chain is Small ribosomal subunit protein uS4 (200 aa).

An S4 RNA-binding domain is found at 92–155 (SRLDAVVYSL…QKLNIIVESV (64 aa)).

The protein belongs to the universal ribosomal protein uS4 family. Part of the 30S ribosomal subunit. Contacts protein S5. The interaction surface between S4 and S5 is involved in control of translational fidelity.

Its function is as follows. One of the primary rRNA binding proteins, it binds directly to 16S rRNA where it nucleates assembly of the body of the 30S subunit. With S5 and S12 plays an important role in translational accuracy. This chain is Small ribosomal subunit protein uS4, found in Staphylococcus aureus (strain JH9).